A 204-amino-acid chain; its full sequence is UPF0056 membrane protein TC_0241 (204 aa).

The next 6 helical transmembrane spans lie at 8–28, 46–66, 68–88, 107–127, 138–158, and 176–196; these read LTLL…FVAL, IFAL…FRLL, VSLP…AINM, IFYP…STLG, LVLG…FFSS, and FGIS…STAF.

The protein belongs to the UPF0056 (MarC) family.

The protein localises to the cell membrane. The sequence is that of UPF0056 membrane protein TC_0241 from Chlamydia muridarum (strain MoPn / Nigg).